Consider the following 543-residue polypeptide: Malate synthase (543 aa).

It belongs to the malate synthase family. As to quaternary structure, homodimer.

The protein resides in the cytoplasm. The enzyme catalyses glyoxylate + acetyl-CoA + H2O = (S)-malate + CoA + H(+). Its pathway is carbohydrate metabolism; glyoxylate cycle; (S)-malate from isocitrate: step 2/2. The sequence is that of Malate synthase (aceB) from Streptomyces arenae.